The chain runs to 900 residues: MGDSGSRRSTLVSRLPIFRRSINRRHDSLPSSPSSSNTVGVHSSSPSSTNSSSGSTGKRRSIFRTPSISFHHKKGSEPKQEPTNQNLSISNGAQPGHSNMQKLSLEEHIKTRGRHSVGFSSSRNKKITRSLTEDFEREKEHSTNKNVFINCLSSGKSEGDDSGFTEDQTRRSVKQSTRKLLPKSFSSHYKFSKPVLQSQSISLVQQSEFSLEVTQYQEREPVLVRASPSCSVDVTERAGSSLQSPLLSADLTTAQTPSEFLALTEDSVSEMDAFSKSGSMASHCDNFGHNDSTSQMSLNSAAVTKTTTELTGTVPCAIMSPGKYRLEGQCSTESNSLPETSAANQKEVLLQIAELPATSVSHSESNLPADSEREENIGLQNGETMLGTNSPRKLGFYEQHKAIAEHVKGIHPISDSKIIPTSGDHHIFNKTSHGYEANPAKVLASSLSPFREGRFIERRLRSSSEGTAGSSRMILKPKDGNIEEVNSLRKQRAGSSSSKMNSLDVLNNLGSCELDEDDLMLDLEFLEEQSLHPSVCREDSYHSVVSCAAVVLTPMEPMIEMKKREEPEFPEPSKQNLSLKLTKDVDQEARCSHISRMPNSPSADWPLQGVEENGGIDSLPFRLMLQDCTAVKTLLLKMKRVLQESADMSPASSTTSLPVSPLTEEPVPFKDIMKDECSMLKLQLKEKDELISQLQEELGKVRHLQKAFASRVDKSTQTELLCYDGLNLKRLETVQGGREATYRNRIVSQNLSTRDRKAIHTPTEDRFRYSAADQTSPYKNKTCQLPSLCLSNFLKDKELAEVIKHSRGTYETLTSDVTQNLRATVGQSSLKPTAKTEGLSTFLEKPKDQVATARQHSTFTGRFGQPPRGPISLHMYSRKNVFLHHNLHSTELQTLGQQDG.

Disordered stretches follow at residues 1 to 100 (MGDS…HSNM) and 156 to 178 (KSEG…QSTR). Over residues 29–56 (LPSSPSSSNTVGVHSSSPSSTNSSSGST) the composition is skewed to low complexity. Over residues 81 to 100 (EPTNQNLSISNGAQPGHSNM) the composition is skewed to polar residues. Residues 673–707 (MKDECSMLKLQLKEKDELISQLQEELGKVRHLQKA) adopt a coiled-coil conformation.

This sequence belongs to the CCSER family.

This Homo sapiens (Human) protein is Serine-rich coiled-coil domain-containing protein 1 (CCSER1).